Here is an 85-residue protein sequence, read N- to C-terminus: Small ribosomal subunit protein uS17 (85 aa).

The protein belongs to the universal ribosomal protein uS17 family. As to quaternary structure, part of the 30S ribosomal subunit.

Its function is as follows. One of the primary rRNA binding proteins, it binds specifically to the 5'-end of 16S ribosomal RNA. The sequence is that of Small ribosomal subunit protein uS17 from Pasteurella multocida (strain Pm70).